Reading from the N-terminus, the 299-residue chain is Streptogrisin-B (299 aa).

The signal sequence occupies residues 1–38; that stretch reads MRIKRTSNRSNAARRVRTTAVLAGLAAVAALAVPTANA. A propeptide spanning residues 39 to 114 is cleaved from the precursor; the sequence is ETPRTFSANQ…ERTPGKFTKL (76 aa). Cysteines 128 and 148 form a disulfide. Active-site charge relay system residues include H147, D177, and S255. The cysteines at positions 249 and 276 are disulfide-linked.

It belongs to the peptidase S1 family. Monomer.

The catalysed reaction is Hydrolysis of proteins with trypsin-like specificity.. Functionally, has a primary specificity for large aliphatic or aromatic amino acids. The sequence is that of Streptogrisin-B (sprB) from Streptomyces griseus.